The chain runs to 70 residues: MIIPWQDIAPETLENLIKEFVLREGTDYGDVEVSLQNKIDQVKHQLASGEVSIVFSELHETVDIQVTKRF.

The protein belongs to the UPF0270 family.

This chain is UPF0270 protein VS_2853, found in Vibrio atlanticus (strain LGP32) (Vibrio splendidus (strain Mel32)).